A 462-amino-acid chain; its full sequence is Siroheme synthase (462 aa).

Positions 1–203 (MEYLPLFANL…GKWEHAEKEI (203 aa)) are precorrin-2 dehydrogenase /sirohydrochlorin ferrochelatase. NAD(+) is bound by residues 22-23 (NV) and 43-44 (DD). Ser-128 is subject to Phosphoserine. Residues 215–462 (GNVALVGAGP…NWFGKIIKEQ (248 aa)) are uroporphyrinogen-III C-methyltransferase. Pro-224 contacts S-adenosyl-L-methionine. Asp-247 (proton acceptor) is an active-site residue. The active-site Proton donor is the Lys-269. Residues 300–302 (GGD), Ile-305, 330–331 (TA), Met-383, and Gly-412 each bind S-adenosyl-L-methionine.

This sequence in the N-terminal section; belongs to the precorrin-2 dehydrogenase / sirohydrochlorin ferrochelatase family. The protein in the C-terminal section; belongs to the precorrin methyltransferase family.

It catalyses the reaction uroporphyrinogen III + 2 S-adenosyl-L-methionine = precorrin-2 + 2 S-adenosyl-L-homocysteine + H(+). The catalysed reaction is precorrin-2 + NAD(+) = sirohydrochlorin + NADH + 2 H(+). It carries out the reaction siroheme + 2 H(+) = sirohydrochlorin + Fe(2+). Its pathway is cofactor biosynthesis; adenosylcobalamin biosynthesis; precorrin-2 from uroporphyrinogen III: step 1/1. It participates in cofactor biosynthesis; adenosylcobalamin biosynthesis; sirohydrochlorin from precorrin-2: step 1/1. The protein operates within porphyrin-containing compound metabolism; siroheme biosynthesis; precorrin-2 from uroporphyrinogen III: step 1/1. It functions in the pathway porphyrin-containing compound metabolism; siroheme biosynthesis; siroheme from sirohydrochlorin: step 1/1. Its pathway is porphyrin-containing compound metabolism; siroheme biosynthesis; sirohydrochlorin from precorrin-2: step 1/1. Its function is as follows. Multifunctional enzyme that catalyzes the SAM-dependent methylations of uroporphyrinogen III at position C-2 and C-7 to form precorrin-2 via precorrin-1. Then it catalyzes the NAD-dependent ring dehydrogenation of precorrin-2 to yield sirohydrochlorin. Finally, it catalyzes the ferrochelation of sirohydrochlorin to yield siroheme. The chain is Siroheme synthase from Baumannia cicadellinicola subsp. Homalodisca coagulata.